Here is a 298-residue protein sequence, read N- to C-terminus: Porphobilinogen deaminase (298 aa).

Cys239 is modified (S-(dipyrrolylmethanemethyl)cysteine).

It belongs to the HMBS family. In terms of assembly, monomer. It depends on dipyrromethane as a cofactor.

The catalysed reaction is 4 porphobilinogen + H2O = hydroxymethylbilane + 4 NH4(+). It participates in porphyrin-containing compound metabolism; protoporphyrin-IX biosynthesis; coproporphyrinogen-III from 5-aminolevulinate: step 2/4. Functionally, tetrapolymerization of the monopyrrole PBG into the hydroxymethylbilane pre-uroporphyrinogen in several discrete steps. This chain is Porphobilinogen deaminase, found in Ehrlichia chaffeensis (strain ATCC CRL-10679 / Arkansas).